A 250-amino-acid chain; its full sequence is Small ribosomal subunit protein uS2 (250 aa).

Residues 225–250 are disordered; the sequence is GAQGGRQARGEDLGAAVEAPSEDALA.

The protein belongs to the universal ribosomal protein uS2 family.

The sequence is that of Small ribosomal subunit protein uS2 from Rhizorhabdus wittichii (strain DSM 6014 / CCUG 31198 / JCM 15750 / NBRC 105917 / EY 4224 / RW1) (Sphingomonas wittichii).